The primary structure comprises 335 residues: Pyridoxal 5'-phosphate synthase subunit PdxS (335 aa).

Asp30 provides a ligand contact to D-ribose 5-phosphate. The Schiff-base intermediate with D-ribose 5-phosphate role is filled by Lys87. Gly159 contacts D-ribose 5-phosphate. Arg171 contacts D-glyceraldehyde 3-phosphate. D-ribose 5-phosphate is bound by residues Gly257 and 278 to 279; that span reads GS.

Belongs to the PdxS/SNZ family. Homohexamer. In the presence of PdxT, forms a dodecamer of heterodimers.

It carries out the reaction aldehydo-D-ribose 5-phosphate + D-glyceraldehyde 3-phosphate + L-glutamine = pyridoxal 5'-phosphate + L-glutamate + phosphate + 3 H2O + H(+). Its pathway is cofactor biosynthesis; pyridoxal 5'-phosphate biosynthesis. Functionally, catalyzes the formation of pyridoxal 5'-phosphate from ribose 5-phosphate (RBP), glyceraldehyde 3-phosphate (G3P) and ammonia. The ammonia is provided by the PdxT subunit. Can also use ribulose 5-phosphate and dihydroxyacetone phosphate as substrates, resulting from enzyme-catalyzed isomerization of RBP and G3P, respectively. The polypeptide is Pyridoxal 5'-phosphate synthase subunit PdxS (Pyrococcus horikoshii (strain ATCC 700860 / DSM 12428 / JCM 9974 / NBRC 100139 / OT-3)).